An 885-amino-acid chain; its full sequence is Protein transport protein SEC24-1 (885 aa).

Zn(2+) contacts are provided by cysteine 164, cysteine 167, cysteine 186, and cysteine 189. The tract at residues 164 to 189 (CRRCRSYLNPFVAFIEQGRRWQCNIC) is zinc finger-like. The segment at 296 to 332 (DDYEESDDDDDEDDDDEEEDNEEEEEEEEDEEDDDDS) is disordered.

This sequence belongs to the SEC23/SEC24 family. SEC24 subfamily. The COPII coat is composed of at least 5 proteins: the SEC23/24 complex, the SEC13/31 complex, and the protein SAR1. Golgi apparatus membrane; Peripheral membrane protein; Cytoplasmic side.

It is found in the cytoplasm. It localises to the cytoplasmic vesicle. Its subcellular location is the COPII-coated vesicle membrane. The protein resides in the endoplasmic reticulum membrane. The protein localises to the golgi apparatus membrane. Component of the coat protein complex II (COPII) which promotes the formation of transport vesicles from the endoplasmic reticulum (ER). The coat has two main functions, the physical deformation of the endoplasmic reticulum membrane into vesicles and the selection of cargo molecules. This chain is Protein transport protein SEC24-1 (SEC241), found in Saccharomyces uvarum (strain ATCC 76518 / CBS 7001 / CLIB 283 / NBRC 10550 / MCYC 623 / NCYC 2669 / NRRL Y-11845) (Yeast).